Reading from the N-terminus, the 512-residue chain is MTINASNIENSFSKINSHFSKLTDYIWPIKRHEISKFLFITLLMFCILFIQNLIRALKDSIVTTMIGAETISFLKFWGVMPSAFLITVIYVKLVNRMKAENIFYLIISIFLTFFALFAYVIFPNHEMLHLRPVTVHNLTASLPNLKWFILLLSKWSFSLFYIIAELWPNVVFALLFWQFVNNITTVEESKRFYPLFGLLSQTGIYLAGHFLENLSNINYYVTNKFALQSSFHTLSIQIILTIVLILGIVSIKTFWLLNHKVLDKKHMALLRFKTKNKSITIAKSFQMILSSRHIRLIATLLICYGIAINLVEGPWKAAATKIYKTPTEYAAFIGSYLSYTGVFTIFFVLLGSNIVRRMGWFTSAVITPSIVFITGILFFAVNNFEGFAGLIIANFILTDPALVAITIGAIQNVLSKSSKYTLFDSTKEMAYVPLEPEIKISGKAAADVIGTKLGKSGSAFLQSLIFIILPSASYQSISICLMIIFILTCVTWIWATKELNKEYKNSIKFSQK.

11 helical membrane passes run 34-54, 71-91, 102-122, 157-177, 192-212, 231-251, 296-316, 330-350, 361-381, 390-410, and 476-496; these read ISKF…QNLI, ISFL…VIYV, IFYL…YVIF, FSLF…LLFW, FYPL…HFLE, FHTL…IVSI, LIAT…GPWK, AAFI…FVLL, FTSA…FFAV, LIIA…IGAI, and SISI…IWAT.

It belongs to the ADP/ATP translocase tlc family.

Its subcellular location is the cell membrane. Its function is as follows. Provides the rickettsial cell with host ATP in exchange for rickettsial ADP. This is an obligate exchange system. This energy acquiring activity is an important component of rickettsial parasitism. The polypeptide is ADP,ATP carrier protein 4 (tlcD) (Rickettsia prowazekii (strain Madrid E)).